The sequence spans 314 residues: NADH-ubiquinone oxidoreductase chain 2 (314 aa).

Helical transmembrane passes span 13–35 (LGVMLIGTILSVSSEELVGVWLG), 61–80 (YFVVQSTGSILMLVGFVSLM), 85–107 (VSGLVMSTAXTVLKSGVFPLHSW), 117–139 (WLASGLMLTWQKVAPLVFLSMIL), 144–166 (LWVVIVSMAGIGAVGGLNQNSVR), 189–209 (VVFVGYFAVYSLSVGLFFYGC), 224–244 (AASGMGLLMLMGMPPFLGFLA), 246–266 (VLVFLMSGSPVIVACIMGSVI), and 294–314 (IWSLVICMNIMGGALILVSFI).

Belongs to the complex I subunit 2 family.

The protein localises to the mitochondrion inner membrane. The catalysed reaction is a ubiquinone + NADH + 5 H(+)(in) = a ubiquinol + NAD(+) + 4 H(+)(out). Its function is as follows. Core subunit of the mitochondrial membrane respiratory chain NADH dehydrogenase (Complex I) that is believed to belong to the minimal assembly required for catalysis. Complex I functions in the transfer of electrons from NADH to the respiratory chain. The immediate electron acceptor for the enzyme is believed to be ubiquinone. This Mytilus edulis (Blue mussel) protein is NADH-ubiquinone oxidoreductase chain 2 (ND2).